Here is a 148-residue protein sequence, read N- to C-terminus: SsrA-binding protein (148 aa).

Residues 119–148 (AKGKKQHDKRETEKKRDWEREKARLMRSPG) form a disordered region. The span at 126 to 142 (DKRETEKKRDWEREKAR) shows a compositional bias: basic and acidic residues.

Belongs to the SmpB family.

The protein resides in the cytoplasm. In terms of biological role, required for rescue of stalled ribosomes mediated by trans-translation. Binds to transfer-messenger RNA (tmRNA), required for stable association of tmRNA with ribosomes. tmRNA and SmpB together mimic tRNA shape, replacing the anticodon stem-loop with SmpB. tmRNA is encoded by the ssrA gene; the 2 termini fold to resemble tRNA(Ala) and it encodes a 'tag peptide', a short internal open reading frame. During trans-translation Ala-aminoacylated tmRNA acts like a tRNA, entering the A-site of stalled ribosomes, displacing the stalled mRNA. The ribosome then switches to translate the ORF on the tmRNA; the nascent peptide is terminated with the 'tag peptide' encoded by the tmRNA and targeted for degradation. The ribosome is freed to recommence translation, which seems to be the essential function of trans-translation. In Paraburkholderia xenovorans (strain LB400), this protein is SsrA-binding protein.